A 471-amino-acid chain; its full sequence is V-type ATP synthase beta chain (471 aa).

Belongs to the ATPase alpha/beta chains family.

Produces ATP from ADP in the presence of a proton gradient across the membrane. The V-type beta chain is a regulatory subunit. The polypeptide is V-type ATP synthase beta chain (Streptococcus pyogenes serotype M18 (strain MGAS8232)).